The following is a 461-amino-acid chain: Nuclear distribution protein PAC1 (461 aa).

The stretch at 64–93 forms a coiled coil; it reads NSIIRLHRKILDLEQKCQQLTEELEAVPTE. 7 WD repeats span residues 118–157, 161–203, 209–252, 254–292, 318–362, 382–421, and 423–461; these read DVGASVTDIKLHPSLPIAFLATDQGKVVAYDLFNRSMPLH, AHMK…AFQL, SHEH…KSFQ, HNQWVRTLELHGDYVITGSNDATIRLSHWPSGNGLSMAV, DDQV…FIPH, GHTSWVRDIKVRGRHLFSCSDDRSIRCWDLVTGQCLKVWP, and ASHGFINCLSVDSDVSNDKLLRELFLSGSIDGKCNVFMR.

Belongs to the WD repeat LIS1/nudF family. As to quaternary structure, self-associates. Interacts with NDL1 and dynein.

Its subcellular location is the cytoplasm. The protein resides in the cytoskeleton. The protein localises to the spindle pole. Its function is as follows. Positively regulates the activity of the minus-end directed microtubule motor protein dynein. Plays a central role in positioning the mitotic spindle at the bud neck during cell division. Targets cytoplasmic dynein to microtubule plus ends, thereby promoting dynein-mediated microtubule sliding along the bud cortex and consequently the movement of the mitotic spindle to the bud neck. In Eremothecium gossypii (strain ATCC 10895 / CBS 109.51 / FGSC 9923 / NRRL Y-1056) (Yeast), this protein is Nuclear distribution protein PAC1.